The primary structure comprises 92 residues: Putative pterin-4-alpha-carbinolamine dehydratase (92 aa).

The protein belongs to the pterin-4-alpha-carbinolamine dehydratase family.

The enzyme catalyses (4aS,6R)-4a-hydroxy-L-erythro-5,6,7,8-tetrahydrobiopterin = (6R)-L-erythro-6,7-dihydrobiopterin + H2O. In Acidobacterium capsulatum (strain ATCC 51196 / DSM 11244 / BCRC 80197 / JCM 7670 / NBRC 15755 / NCIMB 13165 / 161), this protein is Putative pterin-4-alpha-carbinolamine dehydratase.